The chain runs to 218 residues: Phosphatidylserine decarboxylase proenzyme (218 aa).

The active-site Schiff-base intermediate with substrate; via pyruvic acid is the S182. S182 is subject to Pyruvic acid (Ser); by autocatalysis.

The protein belongs to the phosphatidylserine decarboxylase family. PSD-A subfamily. In terms of assembly, heterodimer of a large membrane-associated beta subunit and a small pyruvoyl-containing alpha subunit. The cofactor is pyruvate. In terms of processing, is synthesized initially as an inactive proenzyme. Formation of the active enzyme involves a self-maturation process in which the active site pyruvoyl group is generated from an internal serine residue via an autocatalytic post-translational modification. Two non-identical subunits are generated from the proenzyme in this reaction, and the pyruvate is formed at the N-terminus of the alpha chain, which is derived from the carboxyl end of the proenzyme. The post-translation cleavage follows an unusual pathway, termed non-hydrolytic serinolysis, in which the side chain hydroxyl group of the serine supplies its oxygen atom to form the C-terminus of the beta chain, while the remainder of the serine residue undergoes an oxidative deamination to produce ammonia and the pyruvoyl prosthetic group on the alpha chain.

The protein resides in the cell membrane. It catalyses the reaction a 1,2-diacyl-sn-glycero-3-phospho-L-serine + H(+) = a 1,2-diacyl-sn-glycero-3-phosphoethanolamine + CO2. The protein operates within phospholipid metabolism; phosphatidylethanolamine biosynthesis; phosphatidylethanolamine from CDP-diacylglycerol: step 2/2. Its function is as follows. Catalyzes the formation of phosphatidylethanolamine (PtdEtn) from phosphatidylserine (PtdSer). The sequence is that of Phosphatidylserine decarboxylase proenzyme from Oleidesulfovibrio alaskensis (strain ATCC BAA-1058 / DSM 17464 / G20) (Desulfovibrio alaskensis).